The primary structure comprises 639 residues: Chaperone protein DnaK (639 aa).

Thr198 carries the post-translational modification Phosphothreonine; by autocatalysis. Low complexity predominate over residues 603 to 618; that stretch reads AKAQTQGGAQEGAAKQ. The segment at 603–639 is disordered; sequence AKAQTQGGAQEGAAKQSNATADDVVDAEFEEVKDDKK. Positions 625–639 are enriched in acidic residues; that stretch reads DVVDAEFEEVKDDKK.

This sequence belongs to the heat shock protein 70 family.

In terms of biological role, acts as a chaperone. The sequence is that of Chaperone protein DnaK from Shewanella sp. (strain ANA-3).